Consider the following 445-residue polypeptide: tRNA-2-methylthio-N(6)-dimethylallyladenosine synthase (445 aa).

In terms of domain architecture, MTTase N-terminal spans 2–117; it reads QGLYIKSYGC…LPELIVKARK (116 aa). Cys11, Cys47, Cys80, Cys157, Cys161, and Cys164 together coordinate [4Fe-4S] cluster. Residues 143–374 enclose the Radical SAM core domain; the sequence is KNQKVSAFIS…QELVHKQQLE (232 aa). The TRAM domain maps to 377–441; that stretch reads KKMIGETHPV…KNHLTGIIPN (65 aa).

It belongs to the methylthiotransferase family. MiaB subfamily. Monomer. It depends on [4Fe-4S] cluster as a cofactor.

The protein localises to the cytoplasm. It catalyses the reaction N(6)-dimethylallyladenosine(37) in tRNA + (sulfur carrier)-SH + AH2 + 2 S-adenosyl-L-methionine = 2-methylsulfanyl-N(6)-dimethylallyladenosine(37) in tRNA + (sulfur carrier)-H + 5'-deoxyadenosine + L-methionine + A + S-adenosyl-L-homocysteine + 2 H(+). Catalyzes the methylthiolation of N6-(dimethylallyl)adenosine (i(6)A), leading to the formation of 2-methylthio-N6-(dimethylallyl)adenosine (ms(2)i(6)A) at position 37 in tRNAs that read codons beginning with uridine. The protein is tRNA-2-methylthio-N(6)-dimethylallyladenosine synthase of Ehrlichia ruminantium (strain Welgevonden).